The following is a 308-amino-acid chain: Olfactory receptor 13H1 (308 aa).

Residues 1 to 25 (MAMDNVTAVFQFLLIGISNYPQWRD) lie on the Extracellular side of the membrane. Asn5 carries N-linked (GlcNAc...) asparagine glycosylation. The chain crosses the membrane as a helical span at residues 26–46 (TFFTLVLIIYLSTLLGNGFMI). Over 47 to 54 (FLIHFDPN) the chain is Cytoplasmic. Residues 55–75 (LHTPIYFFLSNLSFLDLCYGT) traverse the membrane as a helical segment. Over 76–99 (ASMPQALVHCFSTHPYLSYPRCLA) the chain is Extracellular. Residues Cys97 and Cys188 are joined by a disulfide bond. A helical membrane pass occupies residues 100 to 120 (QTSVSLALATAECLLLAAMAY). The Cytoplasmic segment spans residues 121 to 139 (DRVVAISNPLRYSVVMNGP). A helical transmembrane segment spans residues 140-159 (VCVCLVATSWGTSLVLTAML). At 160-196 (ILSLRLHFCGANVINHFACEILSLIKLTCSDTSLNEF) the chain is on the extracellular side. Residues 197 to 216 (MILITSIFTLLLPFGFVLLS) form a helical membrane-spanning segment. Residues 217 to 236 (YIRIAMAIIRIRSLQGRLKA) are Cytoplasmic-facing. Residues 237–257 (FTTCGSHLTVVTIFYGSAISM) form a helical membrane-spanning segment. Residues 258-270 (YMKTQSKSYPDQD) are Extracellular-facing. A helical membrane pass occupies residues 271–291 (KFISVFYGALTPMLNPLIYSL). Topologically, residues 292–308 (RKKDVKRAIRKVMLKRT) are cytoplasmic.

The protein belongs to the G-protein coupled receptor 1 family.

The protein localises to the cell membrane. In terms of biological role, odorant receptor. The sequence is that of Olfactory receptor 13H1 (OR13H1) from Homo sapiens (Human).